The sequence spans 441 residues: Mannose-6-phosphate isomerase (441 aa).

Zn(2+)-binding residues include glutamine 111, histidine 113, glutamate 138, and histidine 285. Residue arginine 304 is part of the active site.

This sequence belongs to the mannose-6-phosphate isomerase type 1 family. In terms of assembly, monomer. Zn(2+) is required as a cofactor.

The protein resides in the cytoplasm. The enzyme catalyses D-mannose 6-phosphate = D-fructose 6-phosphate. The protein operates within nucleotide-sugar biosynthesis; GDP-alpha-D-mannose biosynthesis; alpha-D-mannose 1-phosphate from D-fructose 6-phosphate: step 1/2. Functionally, involved in the synthesis of the GDP-mannose and dolichol-phosphate-mannose required for a number of critical mannosyl transfer reactions. The protein is Mannose-6-phosphate isomerase (PMI1) of Candida albicans (strain SC5314 / ATCC MYA-2876) (Yeast).